A 226-amino-acid polypeptide reads, in one-letter code: Ribose-5-phosphate isomerase A (226 aa).

Substrate is bound by residues 33-36 (TGST), 86-89 (DGAD), and 99-102 (KGGG). E108 functions as the Proton acceptor in the catalytic mechanism. K126 serves as a coordination point for substrate.

This sequence belongs to the ribose 5-phosphate isomerase family. Homodimer.

The enzyme catalyses aldehydo-D-ribose 5-phosphate = D-ribulose 5-phosphate. The protein operates within carbohydrate degradation; pentose phosphate pathway; D-ribose 5-phosphate from D-ribulose 5-phosphate (non-oxidative stage): step 1/1. In terms of biological role, catalyzes the reversible conversion of ribose-5-phosphate to ribulose 5-phosphate. This is Ribose-5-phosphate isomerase A from Bordetella parapertussis (strain 12822 / ATCC BAA-587 / NCTC 13253).